The sequence spans 694 residues: Elongation factor G 1 (694 aa).

A tr-type G domain is found at 5–280; the sequence is SRYRNIGIFA…AVVDYLPDPT (276 aa). GTP contacts are provided by residues 14 to 21, 78 to 82, and 132 to 135; these read AHVDAGKT, DTPGH, and NKLD.

It belongs to the TRAFAC class translation factor GTPase superfamily. Classic translation factor GTPase family. EF-G/EF-2 subfamily.

The protein localises to the cytoplasm. In terms of biological role, catalyzes the GTP-dependent ribosomal translocation step during translation elongation. During this step, the ribosome changes from the pre-translocational (PRE) to the post-translocational (POST) state as the newly formed A-site-bound peptidyl-tRNA and P-site-bound deacylated tRNA move to the P and E sites, respectively. Catalyzes the coordinated movement of the two tRNA molecules, the mRNA and conformational changes in the ribosome. The protein is Elongation factor G 1 of Methylococcus capsulatus (strain ATCC 33009 / NCIMB 11132 / Bath).